A 137-amino-acid chain; its full sequence is uncharacterized protein (137 aa).

This is an uncharacterized protein from Rickettsia prowazekii (strain Madrid E).